Reading from the N-terminus, the 147-residue chain is Large ribosomal subunit protein bL9 (147 aa).

The protein belongs to the bacterial ribosomal protein bL9 family.

Functionally, binds to the 23S rRNA. This is Large ribosomal subunit protein bL9 from Geobacter sp. (strain M21).